The following is a 294-amino-acid chain: Beta-lactamase (294 aa).

Positions 1-27 (MFKKRGRQTVLIAAVLAFFTASSPLLA) are cleaved as a signal peptide. The active-site Acyl-ester intermediate is the serine 76. Glutamate 174 (proton acceptor) is an active-site residue. 240–242 (KTG) lines the substrate pocket.

This sequence belongs to the class-A beta-lactamase family.

It catalyses the reaction a beta-lactam + H2O = a substituted beta-amino acid. The protein is Beta-lactamase of Citrobacter koseri (Citrobacter diversus).